We begin with the raw amino-acid sequence, 541 residues long: Cytochrome P450 monooxygenase claU (541 aa).

A helical transmembrane segment spans residues 12 to 32 (VIDTLVILFSTWAFLGLIRVI). Residue Cys-480 coordinates heme.

It belongs to the cytochrome P450 family. Heme serves as cofactor.

It localises to the membrane. Its pathway is secondary metabolite biosynthesis; terpenoid biosynthesis. Cytochrome P450 monooxygenase; part of the gene cluster that mediates the biosynthesis of clavilactone A, a meroterpenoid that features a unique benzo-fused ten-membered carbocyclic ring unit with an alpha,beta-epoxy-gamma-lactone moiety, forming an intriguing 10/5/3 tricyclic nested skeleton. Cytochrome P450 monooxygenases claO, claP, claQ, claU, and claW are close orthologs, suggesting that a redundant function or pseudogenes are present in the cla cluster. These monoxygenases are not involved in clavilactone A biosynthesis nor its modification. ClaR, ClaS and ClaT are sufficient to produce clavilactone A. The biosynthesis begins with the prenyltransferase claS that transfers geranyl pyrophosphate (GPP) to hydroquinone to produces geranylhydroquinone. The cytochrome P450 monooxygenase claR then catalyzes the diradical coupling reaction between the intramolecular hydroquinone and allyl moieties to form the benzo-fused ten-membered carbocyclic ring unit of wigantol. Finally the cytochrome P450 monooxygenase claT exquisitely and stereoselectively assembles the alpha,beta-epoxy-gamma-lactone moiety, producing clavilactone A via arnebinol A. The chain is Cytochrome P450 monooxygenase claU from Ampulloclitocybe clavipes (Club foot).